Here is a 33-residue protein sequence, read N- to C-terminus: Gaegurin-1 (33 aa).

The cysteines at positions 27 and 33 are disulfide-linked.

It belongs to the frog skin active peptide (FSAP) family. Brevinin subfamily. Monomer. Expressed by the skin glands.

The protein resides in the secreted. In terms of biological role, has a non-hemolytic activity. Has a broad spectrum of activity against both Gram-positive and Gram-negative bacteria, fungi and protozoa. This Glandirana rugosa (Japanese wrinkled frog) protein is Gaegurin-1 (GGN1).